A 432-amino-acid chain; its full sequence is Anaerobic glycerol-3-phosphate dehydrogenase subunit B (432 aa).

The protein belongs to the anaerobic G-3-P dehydrogenase subunit B family. Composed of a catalytic GlpA/B dimer and of membrane bound GlpC. It depends on FMN as a cofactor.

The enzyme catalyses a quinone + sn-glycerol 3-phosphate = dihydroxyacetone phosphate + a quinol. It functions in the pathway polyol metabolism; glycerol degradation via glycerol kinase pathway; glycerone phosphate from sn-glycerol 3-phosphate (anaerobic route): step 1/1. Conversion of glycerol 3-phosphate to dihydroxyacetone. Uses fumarate or nitrate as electron acceptor. In Haemophilus influenzae (strain PittGG), this protein is Anaerobic glycerol-3-phosphate dehydrogenase subunit B.